The sequence spans 395 residues: uncharacterized protein (395 aa).

Disordered stretches follow at residues 185-282 (RREV…SSTA) and 316-372 (GSST…TCSS). The span at 248–257 (LHLRTRHPHR) shows a compositional bias: basic residues. The segment covering 342-360 (ARASTHSRSSPSASANSRY) has biased composition (low complexity).

This is an uncharacterized protein from Streptomyces fradiae (Streptomyces roseoflavus).